A 359-amino-acid polypeptide reads, in one-letter code: sn-1 acyl-lipid omega-3 desaturase (ferredoxin) (359 aa).

A compositionally biased stretch (polar residues) spans 1-15; that stretch reads MQLDTISFNNPLNSE. The segment at 1–20 is disordered; sequence MQLDTISFNNPLNSETSEDT. The next 2 helical transmembrane spans lie at 47-67 and 70-90; these read LFYF…ASYL and WLFF…LFVV. Positions 92 to 96 match the Histidine box-1 motif; it reads HDCGH. Positions 128-132 match the Histidine box-2 motif; sequence HRTHH. 2 helical membrane-spanning segments follow: residues 207–227 and 228–248; these read VLLI…GWMW and LLKY…LVTF. The short motif at 294 to 298 is the Histidine box-3 element; sequence HHIFL.

This sequence belongs to the fatty acid desaturase type 2 family. Requires Fe(2+) as cofactor.

The protein resides in the membrane. The enzyme catalyses a 1-[(9Z,12Z)-octadecdienoyl]-2-acyl-glycerolipid + 2 reduced [2Fe-2S]-[ferredoxin] + O2 + 2 H(+) = a 1-[(9Z,12Z,15Z)-octadectrienoyl]-2-acyl-glycerolipid + 2 oxidized [2Fe-2S]-[ferredoxin] + 2 H2O. The catalysed reaction is a 1-[(6Z,9Z,12Z)-octadectrienoyl]-2-acyl-glycerolipid + 2 reduced [2Fe-2S]-[ferredoxin] + O2 + 2 H(+) = a 1-[(6Z,9Z,12Z,15Z)-octadectetraenoyl]-2-acyl-glycerolipid + 2 oxidized [2Fe-2S]-[ferredoxin] + 2 H2O. It functions in the pathway lipid metabolism; polyunsaturated fatty acid biosynthesis. Desaturase involved in fatty acid biosynthesis. Introduces a double bond at carbon 15 of linoleoyl and gamma-linolenoyl groups attached to the sn-1 position of the glycerol moiety of membrane glycerolipids. In Nostoc sp. (strain 36), this protein is sn-1 acyl-lipid omega-3 desaturase (ferredoxin).